The primary structure comprises 217 residues: ATP-dependent Clp protease proteolytic subunit (217 aa).

Serine 120 (nucleophile) is an active-site residue. The active site involves histidine 145.

The protein belongs to the peptidase S14 family. In terms of assembly, fourteen ClpP subunits assemble into 2 heptameric rings which stack back to back to give a disk-like structure with a central cavity, resembling the structure of eukaryotic proteasomes.

The protein resides in the cytoplasm. The enzyme catalyses Hydrolysis of proteins to small peptides in the presence of ATP and magnesium. alpha-casein is the usual test substrate. In the absence of ATP, only oligopeptides shorter than five residues are hydrolyzed (such as succinyl-Leu-Tyr-|-NHMec, and Leu-Tyr-Leu-|-Tyr-Trp, in which cleavage of the -Tyr-|-Leu- and -Tyr-|-Trp bonds also occurs).. Functionally, cleaves peptides in various proteins in a process that requires ATP hydrolysis. Has a chymotrypsin-like activity. Plays a major role in the degradation of misfolded proteins. In Ralstonia nicotianae (strain ATCC BAA-1114 / GMI1000) (Ralstonia solanacearum), this protein is ATP-dependent Clp protease proteolytic subunit.